The following is a 667-amino-acid chain: Bifunctional polymyxin resistance protein ArnA (667 aa).

Residues 1–304 (MKAIVFAYHD…EMGIVTDVRL (304 aa)) are formyltransferase ArnAFT. His104 serves as the catalytic Proton donor; for formyltransferase activity. Residues Arg114 and 136–140 (VKKAD) each bind (6R)-10-formyltetrahydrofolate. Residues 314–667 (RRTRVLILGV…TAAPKDELNA (354 aa)) form a dehydrogenase ArnADH region. NAD(+)-binding positions include Asp347 and 368 to 369 (DI). Residues Ala393, Tyr398, and 432–433 (TS) contribute to the UDP-alpha-D-glucuronate site. The Proton acceptor; for decarboxylase activity role is filled by Glu434. Residues Arg460, Asn492, 526-535 (KLVDGGAQKR), and Tyr613 each bind UDP-alpha-D-glucuronate. The Proton donor; for decarboxylase activity role is filled by Arg619.

This sequence in the N-terminal section; belongs to the Fmt family. UDP-L-Ara4N formyltransferase subfamily. In the C-terminal section; belongs to the NAD(P)-dependent epimerase/dehydratase family. UDP-glucuronic acid decarboxylase subfamily. As to quaternary structure, homohexamer, formed by a dimer of trimers.

The catalysed reaction is UDP-alpha-D-glucuronate + NAD(+) = UDP-beta-L-threo-pentopyranos-4-ulose + CO2 + NADH. It carries out the reaction UDP-4-amino-4-deoxy-beta-L-arabinose + (6R)-10-formyltetrahydrofolate = UDP-4-deoxy-4-formamido-beta-L-arabinose + (6S)-5,6,7,8-tetrahydrofolate + H(+). It functions in the pathway nucleotide-sugar biosynthesis; UDP-4-deoxy-4-formamido-beta-L-arabinose biosynthesis; UDP-4-deoxy-4-formamido-beta-L-arabinose from UDP-alpha-D-glucuronate: step 1/3. The protein operates within nucleotide-sugar biosynthesis; UDP-4-deoxy-4-formamido-beta-L-arabinose biosynthesis; UDP-4-deoxy-4-formamido-beta-L-arabinose from UDP-alpha-D-glucuronate: step 3/3. Its pathway is bacterial outer membrane biogenesis; lipopolysaccharide biosynthesis. In terms of biological role, bifunctional enzyme that catalyzes the oxidative decarboxylation of UDP-glucuronic acid (UDP-GlcUA) to UDP-4-keto-arabinose (UDP-Ara4O) and the addition of a formyl group to UDP-4-amino-4-deoxy-L-arabinose (UDP-L-Ara4N) to form UDP-L-4-formamido-arabinose (UDP-L-Ara4FN). The modified arabinose is attached to lipid A and is required for resistance to polymyxin and cationic antimicrobial peptides. The sequence is that of Bifunctional polymyxin resistance protein ArnA from Yersinia pseudotuberculosis serotype O:3 (strain YPIII).